An 890-amino-acid polypeptide reads, in one-letter code: DNA mismatch repair protein MutS (890 aa).

An ATP-binding site is contributed by 645–652; that stretch reads GPNMAGKS.

Belongs to the DNA mismatch repair MutS family.

This protein is involved in the repair of mismatches in DNA. It is possible that it carries out the mismatch recognition step. This protein has a weak ATPase activity. The chain is DNA mismatch repair protein MutS from Rickettsia africae (strain ESF-5).